The sequence spans 82 residues: Exodeoxyribonuclease 7 small subunit (82 aa).

Belongs to the XseB family. Heterooligomer composed of large and small subunits.

Its subcellular location is the cytoplasm. It catalyses the reaction Exonucleolytic cleavage in either 5'- to 3'- or 3'- to 5'-direction to yield nucleoside 5'-phosphates.. Bidirectionally degrades single-stranded DNA into large acid-insoluble oligonucleotides, which are then degraded further into small acid-soluble oligonucleotides. The chain is Exodeoxyribonuclease 7 small subunit from Pectobacterium atrosepticum (strain SCRI 1043 / ATCC BAA-672) (Erwinia carotovora subsp. atroseptica).